An 882-amino-acid polypeptide reads, in one-letter code: HTH-type transcriptional regulator AlkS (882 aa).

51 to 58 (APPGYGKT) provides a ligand contact to ATP. The 66-residue stretch at 815–880 (ENKADALLTR…QATIEAERQG (66 aa)) folds into the HTH luxR-type domain. The H-T-H motif DNA-binding region spans 839 to 858 (NKQIATNMHVTEDAIKWHMR).

It participates in hydrocarbon metabolism; alkane degradation. Its function is as follows. This protein activates the expression of alkBFGHJKL operon in the presence of alkanes. The protein is HTH-type transcriptional regulator AlkS (alkS) of Ectopseudomonas oleovorans (Pseudomonas oleovorans).